The primary structure comprises 295 residues: Bifunctional protein FolD (295 aa).

NADP(+) contacts are provided by residues 166–168, Thr-195, and Val-236; that span reads GRS.

The protein belongs to the tetrahydrofolate dehydrogenase/cyclohydrolase family. In terms of assembly, homodimer.

The catalysed reaction is (6R)-5,10-methylene-5,6,7,8-tetrahydrofolate + NADP(+) = (6R)-5,10-methenyltetrahydrofolate + NADPH. The enzyme catalyses (6R)-5,10-methenyltetrahydrofolate + H2O = (6R)-10-formyltetrahydrofolate + H(+). Its pathway is one-carbon metabolism; tetrahydrofolate interconversion. In terms of biological role, catalyzes the oxidation of 5,10-methylenetetrahydrofolate to 5,10-methenyltetrahydrofolate and then the hydrolysis of 5,10-methenyltetrahydrofolate to 10-formyltetrahydrofolate. The sequence is that of Bifunctional protein FolD from Syntrophobacter fumaroxidans (strain DSM 10017 / MPOB).